We begin with the raw amino-acid sequence, 470 residues long: Putative multidrug resistance protein MdtD (470 aa).

Topologically, residues 1–11 are periplasmic; that stretch reads MTELPDNTRWQ. A helical transmembrane segment spans residues 12 to 32; it reads LWIVAFGFFMQSLDTTIVNTA. Residues 33 to 48 lie on the Cytoplasmic side of the membrane; that stretch reads LPSMAKSLGESPLHMH. Residues 49–69 form a helical membrane-spanning segment; that stretch reads MVVVSYVLTVAVMLPASGWLA. Topologically, residues 70 to 76 are periplasmic; the sequence is DKIGVRN. Residues 77–97 form a helical membrane-spanning segment; the sequence is IFFAAIVLFTLGSLFCALSGT. The Cytoplasmic segment spans residues 98-101; sequence LNQL. A helical membrane pass occupies residues 102–124; the sequence is VLARVLQGVGGAMMVPVGRLTVM. The Periplasmic portion of the chain corresponds to 125 to 137; it reads KIVPRAQYMAAMT. Residues 138–158 form a helical membrane-spanning segment; that stretch reads FVTLPGQIGPLLGPALGGVLV. At 159-164 the chain is on the cytoplasmic side; that stretch reads EYASWH. The chain crosses the membrane as a helical span at residues 165–185; sequence WIFLINIPVGIVGAMATFMLM. Residues 186–196 are Periplasmic-facing; the sequence is PNYTIETRRFD. Residues 197–217 traverse the membrane as a helical segment; the sequence is LPGFLLLAIGMAVLTLALDGS. Residues 218–224 lie on the Cytoplasmic side of the membrane; it reads KSMGISP. The chain crosses the membrane as a helical span at residues 225–245; it reads WTLAGLAAGGAAAILLYLFHA. The Periplasmic portion of the chain corresponds to 246-262; the sequence is KKNSGALFSLRLFRTPT. The chain crosses the membrane as a helical span at residues 263–283; it reads FSLGLLGSFAGRIGSGMLPFM. Residues 284-285 are Cytoplasmic-facing; sequence TP. Residues 286–306 form a helical membrane-spanning segment; the sequence is VFLQIGLGFSPFHAGLMMIPM. Topologically, residues 307-341 are periplasmic; sequence VLGSMGMKRIVVQIVNRFGYRRVLVATTLGLALVS. The chain crosses the membrane as a helical span at residues 342–362; the sequence is LLFMSVALLGWYYLLPLVLLL. The Cytoplasmic segment spans residues 363–395; that stretch reads QGMVNSARFSSMNTLTLKDLPDTLASSGNSLLS. Residues 396–416 form a helical membrane-spanning segment; it reads MIMQLSMSIGVTIAGMLLGMF. Residues 417-430 are Periplasmic-facing; sequence GQQHIGIDSSATHH. A helical transmembrane segment spans residues 431 to 451; the sequence is VFMYTWLCMAVIIALPAIIFA. The Cytoplasmic portion of the chain corresponds to 452-470; sequence RVPNDTQQNMVISRRKRSL.

It belongs to the major facilitator superfamily. TCR/Tet family.

Its subcellular location is the cell inner membrane. The polypeptide is Putative multidrug resistance protein MdtD (Salmonella agona (strain SL483)).